Reading from the N-terminus, the 465-residue chain is Serine/threonine-protein kinase 38 (465 aa).

Residue Ala2 is modified to N-acetylalanine. The tract at residues 62–87 (KRLRRSAHARKETEFLRLKRTRLGLE) is interaction with S100B. Thr74 bears the Phosphothreonine mark. The Protein kinase domain maps to 89-382 (FESLKVIGRG…VEEIKNNSFF (294 aa)). Residues 95-103 (IGRGAFGEV) and Lys118 contribute to the ATP site. Asp212 (proton acceptor) is an active-site residue. Residue Ser264 is modified to Phosphoserine. A Phosphoserine; by autocatalysis modification is found at Ser281. The UFM1-interacting motif (UFIM) signature appears at 306 to 311 (WSLGVI). The AGC-kinase C-terminal domain maps to 383 to 455 (EGVDWEHIRE…KRFEGLTARG (73 aa)). At Thr444 the chain carries Phosphothreonine; by STK24/MST3.

Belongs to the protein kinase superfamily. AGC Ser/Thr protein kinase family. In terms of assembly, homodimeric S100B binds two molecules of STK38. Interacts with MOB1 and MOB2. Interacts with MAP3K1 and MAP3K2 (via the kinase domain). Forms a tripartite complex with MOBKL1B and STK3/MST2. Interacts with MICAL1; leading to inhibit the protein kinase activity by antagonizing activation by MST1/STK4. It depends on Mg(2+) as a cofactor. Post-translationally, ISGylated. In terms of processing, phosphorylated by STK3/MST2 and this is enhanced by MOBKL1B.

The protein resides in the nucleus. It localises to the cytoplasm. The protein localises to the chromosome. The enzyme catalyses L-seryl-[protein] + ATP = O-phospho-L-seryl-[protein] + ADP + H(+). The catalysed reaction is L-threonyl-[protein] + ATP = O-phospho-L-threonyl-[protein] + ADP + H(+). Activated by binding of S100B which releases autoinhibitory N-lobe interactions, enabling ATP to bind and the autophosphorylation of Ser-281. Thr-444 then undergoes calcium-dependent phosphorylation by STK24/MST3. Interactions between phosphorylated Thr-444 and the N-lobe promote additional structural changes that complete the activation of the kinase. Autoinhibition is also released by the binding of MOB1/MOBKL1A and MOB2/HCCA2 to the N-terminal of STK38. In terms of biological role, serine/threonine-protein kinase that acts as a negative regulator of MAP3K1/2 signaling. Converts MAP3K2 from its phosphorylated form to its non-phosphorylated form and inhibits autophosphorylation of MAP3K2. Acts as an ufmylation 'reader' in a kinase-independent manner: specifically recognizes and binds mono-ufmylated histone H4 in response to DNA damage, promoting the recruitment of SUV39H1 to the double-strand breaks, resulting in ATM activation. In Bos taurus (Bovine), this protein is Serine/threonine-protein kinase 38 (STK38).